Reading from the N-terminus, the 109-residue chain is Nucleoid-associated protein Cvib_1034 (109 aa).

Belongs to the YbaB/EbfC family. As to quaternary structure, homodimer.

It is found in the cytoplasm. It localises to the nucleoid. Functionally, binds to DNA and alters its conformation. May be involved in regulation of gene expression, nucleoid organization and DNA protection. The sequence is that of Nucleoid-associated protein Cvib_1034 from Chlorobium phaeovibrioides (strain DSM 265 / 1930) (Prosthecochloris vibrioformis (strain DSM 265)).